We begin with the raw amino-acid sequence, 282 residues long: Deoxyribonuclease-1 (282 aa).

An N-terminal signal peptide occupies residues 1-22 (MRGARLTGALLALAGLLQVALS). An N-linked (GlcNAc...) asparagine glycan is attached at N40. Residue E100 is part of the active site. C123 and C126 are joined by a disulfide. A glycan (N-linked (GlcNAc...) asparagine) is linked at N128. H156 is an active-site residue. C195 and C231 are disulfide-bonded.

This sequence belongs to the DNase I family. Ca(2+) is required as a cofactor. The cofactor is Mg(2+).

The protein resides in the secreted. It localises to the zymogen granule. Its subcellular location is the nucleus envelope. The enzyme catalyses Endonucleolytic cleavage to 5'-phosphodinucleotide and 5'-phosphooligonucleotide end-products.. Serum endocuclease secreted into body fluids by a wide variety of exocrine and endocrine organs. Expressed by non-hematopoietic tissues and preferentially cleaves protein-free DNA. Among other functions, seems to be involved in cell death by apoptosis. Binds specifically to G-actin and blocks actin polymerization. Together with DNASE1L3, plays a key role in degrading neutrophil extracellular traps (NETs). NETs are mainly composed of DNA fibers and are released by neutrophils to bind pathogens during inflammation. Degradation of intravascular NETs by DNASE1 and DNASE1L3 is required to prevent formation of clots that obstruct blood vessels and cause organ damage following inflammation. This chain is Deoxyribonuclease-1 (DNASE1), found in Equus caballus (Horse).